We begin with the raw amino-acid sequence, 536 residues long: uncharacterized protein (536 aa).

The Cytoplasmic segment spans residues 1–8; the sequence is MVSIKRYE. The helical transmembrane segment at 9–29 threads the bilayer; the sequence is IISFVIAAFFFLSGLSMWIAF. Residues 30 to 502 are Extracellular-facing; that stretch reads WPIFNSELRS…VWLGVIIVPR (473 aa). Residues Asn73, Asn236, Asn363, and Asn376 are each glycosylated (N-linked (GlcNAc...) asparagine). Residues 503–523 form a helical membrane-spanning segment; it reads IIEYLKFVLIFISICILTTLL. Residues 524–536 are Cytoplasmic-facing; it reads VIRVRVKGTVSVV.

Belongs to the CD36 family.

Its subcellular location is the membrane. This is an uncharacterized protein from Caenorhabditis elegans.